The sequence spans 298 residues: MIKVRVPATSANMGPGFDSIGMAVTLYNEFAFKEINTGLKFNGIPEEFCNEDNIIYEAMKYCFDKADYKFKGLEISVLKQDIPISRGLGSSSSCIVGGLIGANEILGGKFSKDELLEMAVEIEGHPDNVAPALFGGIVVAIIENNKTVYNKIDIKNKVKFITIVPDFRLSTEKARQVLPKQISRADGIYNIGRAALMISCFLTDRYDLIRSACNDALHQNYRKELIPHFDDVYNKCYELGALGCYLSGAGPTIMAIIDNGAESFSNNIKQYLKDKDIKWRVLELQADNKGAVLIKGDC.

83–93 is an ATP binding site; the sequence is PISRGLGSSSS.

The protein belongs to the GHMP kinase family. Homoserine kinase subfamily.

It is found in the cytoplasm. The catalysed reaction is L-homoserine + ATP = O-phospho-L-homoserine + ADP + H(+). The protein operates within amino-acid biosynthesis; L-threonine biosynthesis; L-threonine from L-aspartate: step 4/5. In terms of biological role, catalyzes the ATP-dependent phosphorylation of L-homoserine to L-homoserine phosphate. This chain is Homoserine kinase, found in Clostridium botulinum (strain Alaska E43 / Type E3).